Consider the following 79-residue polypeptide: Putative membrane protein insertion efficiency factor (79 aa).

The protein belongs to the UPF0161 family.

It is found in the cell inner membrane. Its function is as follows. Could be involved in insertion of integral membrane proteins into the membrane. This chain is Putative membrane protein insertion efficiency factor, found in Rippkaea orientalis (strain PCC 8801 / RF-1) (Cyanothece sp. (strain PCC 8801)).